Here is a 296-residue protein sequence, read N- to C-terminus: Acetylglutamate kinase (296 aa).

Residues 71-72 (GG), R93, and N186 contribute to the substrate site.

Belongs to the acetylglutamate kinase family. ArgB subfamily.

It is found in the cytoplasm. The catalysed reaction is N-acetyl-L-glutamate + ATP = N-acetyl-L-glutamyl 5-phosphate + ADP. It participates in amino-acid biosynthesis; L-arginine biosynthesis; N(2)-acetyl-L-ornithine from L-glutamate: step 2/4. In terms of biological role, catalyzes the ATP-dependent phosphorylation of N-acetyl-L-glutamate. This Synechococcus sp. (strain RCC307) protein is Acetylglutamate kinase.